Here is a 150-residue protein sequence, read N- to C-terminus: Arginine repressor (150 aa).

Belongs to the ArgR family.

It is found in the cytoplasm. It participates in amino-acid biosynthesis; L-arginine biosynthesis [regulation]. Its function is as follows. Regulates arginine biosynthesis genes. This chain is Arginine repressor, found in Psychromonas ingrahamii (strain DSM 17664 / CCUG 51855 / 37).